The sequence spans 88 residues: Large ribosomal subunit protein bL31B (88 aa).

This sequence belongs to the bacterial ribosomal protein bL31 family. Type B subfamily. As to quaternary structure, part of the 50S ribosomal subunit.

This is Large ribosomal subunit protein bL31B from Paraburkholderia xenovorans (strain LB400).